The primary structure comprises 269 residues: Formamidopyrimidine-DNA glycosylase (269 aa).

The active-site Schiff-base intermediate with DNA is proline 2. Glutamate 3 (proton donor) is an active-site residue. The active-site Proton donor; for beta-elimination activity is the lysine 57. The DNA site is built by histidine 90, arginine 109, and lysine 150. Residues 235–269 (QVYGRKGEPCRVCGTPIVATKHAQRATFYCRQCQK) form an FPG-type zinc finger. The Proton donor; for delta-elimination activity role is filled by arginine 259.

It belongs to the FPG family. In terms of assembly, monomer. Requires Zn(2+) as cofactor.

The catalysed reaction is Hydrolysis of DNA containing ring-opened 7-methylguanine residues, releasing 2,6-diamino-4-hydroxy-5-(N-methyl)formamidopyrimidine.. It carries out the reaction 2'-deoxyribonucleotide-(2'-deoxyribose 5'-phosphate)-2'-deoxyribonucleotide-DNA = a 3'-end 2'-deoxyribonucleotide-(2,3-dehydro-2,3-deoxyribose 5'-phosphate)-DNA + a 5'-end 5'-phospho-2'-deoxyribonucleoside-DNA + H(+). Functionally, involved in base excision repair of DNA damaged by oxidation or by mutagenic agents. Acts as a DNA glycosylase that recognizes and removes damaged bases. Has a preference for oxidized purines, such as 7,8-dihydro-8-oxoguanine (8-oxoG). Has AP (apurinic/apyrimidinic) lyase activity and introduces nicks in the DNA strand. Cleaves the DNA backbone by beta-delta elimination to generate a single-strand break at the site of the removed base with both 3'- and 5'-phosphates. The chain is Formamidopyrimidine-DNA glycosylase from Escherichia coli O6:K15:H31 (strain 536 / UPEC).